The sequence spans 322 residues: Secreted RxLR effector protein RXLR-C17 (322 aa).

Positions 1–25 (MREPAFSFRLHLFAAMILLVDVFSA) are cleaved as a signal peptide. A RxLR-dEER motif is present at residues 43 to 62 (RQLRARDSQAKNYVIRDEER). Residue asparagine 73 is glycosylated (N-linked (GlcNAc...) asparagine).

The protein belongs to the RxLR effector family.

The protein resides in the secreted. The protein localises to the host cytoplasm. It is found in the host nucleus. Secreted effector that suppresses pattern-triggered immunity (PTI) in plant host. The chain is Secreted RxLR effector protein RXLR-C17 from Plasmopara halstedii (Downy mildew of sunflower).